Consider the following 205-residue polypeptide: Probable GTP-binding protein EngB (205 aa).

One can recognise an EngB-type G domain in the interval 29–203; sequence QGAEIAFIGR…KAVLSQWFRS (175 aa). GTP contacts are provided by residues 37 to 44, 64 to 68, 82 to 85, 149 to 152, and 182 to 184; these read GRSNAGKS, GRTQM, DLPG, TKSD, and FSS. Mg(2+) contacts are provided by Ser44 and Thr66.

This sequence belongs to the TRAFAC class TrmE-Era-EngA-EngB-Septin-like GTPase superfamily. EngB GTPase family. Mg(2+) serves as cofactor.

Its function is as follows. Necessary for normal cell division and for the maintenance of normal septation. The polypeptide is Probable GTP-binding protein EngB (Coxiella burnetii (strain CbuG_Q212) (Coxiella burnetii (strain Q212))).